Consider the following 97-residue polypeptide: UPF0235 protein APL_1380 (97 aa).

Belongs to the UPF0235 family.

This Actinobacillus pleuropneumoniae serotype 5b (strain L20) protein is UPF0235 protein APL_1380.